The primary structure comprises 554 residues: Glutamine--tRNA ligase (554 aa).

Positions P34–H44 match the 'HIGH' region motif. ATP is bound by residues E35–N37 and H41–S47. Residues D67 and Y212 each contribute to the L-glutamine site. Residues T231, R261–L262, and M269–K271 contribute to the ATP site. Positions V268–R272 match the 'KMSKS' region motif. The interval T317–E324 is interaction with tRNA.

Belongs to the class-I aminoacyl-tRNA synthetase family. In terms of assembly, monomer.

The protein localises to the cytoplasm. It carries out the reaction tRNA(Gln) + L-glutamine + ATP = L-glutaminyl-tRNA(Gln) + AMP + diphosphate. This is Glutamine--tRNA ligase from Shigella flexneri serotype 5b (strain 8401).